The chain runs to 336 residues: Coproporphyrin III ferrochelatase (336 aa).

2 residues coordinate Fe-coproporphyrin III: Ser52 and Tyr116. Residues His172 and Glu255 each contribute to the Fe(2+) site.

Belongs to the ferrochelatase family.

The protein localises to the cytoplasm. The catalysed reaction is Fe-coproporphyrin III + 2 H(+) = coproporphyrin III + Fe(2+). Its pathway is porphyrin-containing compound metabolism; protoheme biosynthesis. Involved in coproporphyrin-dependent heme b biosynthesis. Catalyzes the insertion of ferrous iron into coproporphyrin III to form Fe-coproporphyrin III. This is Coproporphyrin III ferrochelatase from Mycobacterium avium (strain 104).